Reading from the N-terminus, the 83-residue chain is Conotoxin VnMKLT1-022 (83 aa).

Positions 1–22 (MKLMCMMIVAVLFLTAWTFVTA) are cleaved as a signal peptide. Positions 23-55 (DDSINGPENRRIWEKLLSKTRDEMKNPEASKLN) are excised as a propeptide. 3 cysteine pairs are disulfide-bonded: Cys59–Cys74, Cys66–Cys78, and Cys73–Cys82.

This sequence belongs to the conotoxin O1 superfamily. In terms of tissue distribution, expressed by the venom duct.

The protein localises to the secreted. The chain is Conotoxin VnMKLT1-022 from Conus ventricosus (Mediterranean cone).